Here is a 302-residue protein sequence, read N- to C-terminus: MPINIPKDLPAKEILEQENIFVMDEERAYSQDIRPLNIIILNLMPEKEKAETQLLRLLGNSPLQVNVTFLRPATHEPKTTSKHHLEQFYTIFPHIRHRKFDGMIITGAPVEQLPFEEVTYWDELTDIMEWTKTNVTSTLHICWGAQAGLYYHYGIPKYPLPEKCFGVFNHTVEAKNVKLLRGFDDVFRMPHSRHTDVKREDIEKVPDLTILSMSDKAGVCLVASNDGRRIFLTGHPEYDATTLKEEYERDLAKGLPIHIPESYFPNDDPSQPPLNTWRSHANLLFVNWLNYYVYQETPYEWE.

Cysteine 142 (acyl-thioester intermediate) is an active-site residue. Positions 163 and 192 each coordinate substrate. Catalysis depends on histidine 235, which acts as the Proton acceptor. Glutamate 237 is a catalytic residue. Arginine 249 contributes to the substrate binding site.

The protein belongs to the MetA family.

Its subcellular location is the cytoplasm. The enzyme catalyses L-homoserine + acetyl-CoA = O-acetyl-L-homoserine + CoA. It functions in the pathway amino-acid biosynthesis; L-methionine biosynthesis via de novo pathway; O-acetyl-L-homoserine from L-homoserine: step 1/1. Functionally, transfers an acetyl group from acetyl-CoA to L-homoserine, forming acetyl-L-homoserine. The chain is Homoserine O-acetyltransferase from Geobacillus kaustophilus.